The primary structure comprises 494 residues: UPF0164 protein TP_0859/TP_0860 (494 aa).

An N-terminal signal peptide occupies residues 1 to 44 (MVRRPCVSAAPVRVGGRLVFGFARVGSRGLCLGALLLSPRIVLA).

The protein belongs to the UPF0164 family.

The sequence is that of UPF0164 protein TP_0859/TP_0860 from Treponema pallidum (strain Nichols).